Here is a 278-residue protein sequence, read N- to C-terminus: Ribosomal RNA small subunit methyltransferase A (278 aa).

6 residues coordinate S-adenosyl-L-methionine: Asn27, Leu29, Gly54, Glu75, Asp101, and Asn120.

It belongs to the class I-like SAM-binding methyltransferase superfamily. rRNA adenine N(6)-methyltransferase family. RsmA subfamily.

It localises to the cytoplasm. It catalyses the reaction adenosine(1518)/adenosine(1519) in 16S rRNA + 4 S-adenosyl-L-methionine = N(6)-dimethyladenosine(1518)/N(6)-dimethyladenosine(1519) in 16S rRNA + 4 S-adenosyl-L-homocysteine + 4 H(+). Functionally, specifically dimethylates two adjacent adenosines (A1518 and A1519) in the loop of a conserved hairpin near the 3'-end of 16S rRNA in the 30S particle. May play a critical role in biogenesis of 30S subunits. This chain is Ribosomal RNA small subunit methyltransferase A, found in Zymomonas mobilis subsp. mobilis (strain ATCC 31821 / ZM4 / CP4).